A 476-amino-acid chain; its full sequence is Retinoic acid receptor gamma (476 aa).

The modulating stretch occupies residues 1 to 109; sequence MANSSKERLC…PPPPPRVYKP (109 aa). A compositionally biased stretch (low complexity) spans 81–96; sequence STVETQSTSSEEMVPS. Positions 81–102 are disordered; it reads STVETQSTSSEEMVPSSPSPPP. 2 NR C4-type zinc fingers span residues 110 to 130 and 146 to 170; these read CFVC…CEGC and CHRD…LQKC. Positions 110–175 form a DNA-binding region, nuclear receptor; the sequence is CFVCNDKSSG…RLQKCFQVGM (66 aa). Positions 176-205 are hinge; it reads SKEAVRNDRNKKKKEIKEEVVLPDSYEMPP. The short motif at 184–189 is the Nuclear localization signal element; that stretch reads RNKKKK. In terms of domain architecture, NR LBD spans 206 to 440; sequence EMEELIQKVS…PLIREMLENP (235 aa). The disordered stretch occupies residues 435-476; that stretch reads EMLENPEAFEDGAATPKPSERSSSESSNGSPTGEDSSGSKTP. Positions 462–476 are enriched in polar residues; the sequence is NGSPTGEDSSGSKTP.

The protein belongs to the nuclear hormone receptor family. NR1 subfamily. In terms of assembly, heterodimer; with a rxr molecule. Binds DNA preferentially as a rar/rxr heterodimer. As to expression, expressed in embryos, tadpoles and various adult tissue such as kidney, testis, brain, liver, skeletal muscle and spleen.

It localises to the nucleus. Receptor for retinoic acid. Retinoic acid receptors bind as heterodimers to their target response elements in response to their ligands, all-trans or 9-cis retinoic acid, and regulate gene expression in various biological processes. The rar/rxr heterodimers bind to the retinoic acid response elements (RARE) composed of tandem 5'-AGGTCA-3' sites known as DR1-DR5. This is Retinoic acid receptor gamma (rarg) from Xenopus laevis (African clawed frog).